The chain runs to 325 residues: Solute carrier family 35 member B1 (325 aa).

8 helical membrane passes run 18–38 (PVCFLGVFACYFYYGILQESI), 54–74 (FALSLVFIQCVINAAFAKLLI), 88–108 (WLYAACSLSYLGAMVSSNSAL), 139–159 (YPLAKYLCVLLIVTGVALFMY), 171–191 (IFGYGELLLLLSLTLDGLTGV), 213–233 (LWSTLFLGAGILFTGELWEFL), 246–266 (ILLFGLTSALGQSFIFMTVVY), and 288–308 (VILFANPISTMQWVGTVLVFL). The Di-lysine motif signature appears at 321–325 (KKTSH).

The protein belongs to the nucleotide-sugar transporter family. SLC35B subfamily.

It is found in the endoplasmic reticulum membrane. Its function is as follows. Probable sugar transporter. The protein is Solute carrier family 35 member B1 (SLC35B1) of Gallus gallus (Chicken).